The primary structure comprises 332 residues: Biotin synthase (332 aa).

A Radical SAM core domain is found at 53 to 282 (HFGKKVKLNM…TKEIRISGGR (230 aa)). [4Fe-4S] cluster contacts are provided by Cys-71, Cys-75, and Cys-78. [2Fe-2S] cluster is bound by residues Cys-115, Cys-147, Cys-207, and Arg-277.

Belongs to the radical SAM superfamily. Biotin synthase family. Homodimer. [4Fe-4S] cluster is required as a cofactor. [2Fe-2S] cluster serves as cofactor.

The catalysed reaction is (4R,5S)-dethiobiotin + (sulfur carrier)-SH + 2 reduced [2Fe-2S]-[ferredoxin] + 2 S-adenosyl-L-methionine = (sulfur carrier)-H + biotin + 2 5'-deoxyadenosine + 2 L-methionine + 2 oxidized [2Fe-2S]-[ferredoxin]. It functions in the pathway cofactor biosynthesis; biotin biosynthesis; biotin from 7,8-diaminononanoate: step 2/2. In terms of biological role, catalyzes the conversion of dethiobiotin (DTB) to biotin by the insertion of a sulfur atom into dethiobiotin via a radical-based mechanism. This chain is Biotin synthase, found in Bacillus cereus (strain AH187).